We begin with the raw amino-acid sequence, 205 residues long: Probable NAD(P)H dehydrogenase (quinone) FQR1-like 1 (205 aa).

The Flavodoxin-like domain occupies 5–192; it reads VYIVYYSMYG…GQAFHQGKYI (188 aa). FMN-binding positions include 11 to 15, 112 to 165, and His-136; these read SMYGH and IFYS…SPYG. Residue Tyr-13 participates in NAD(+) binding.

The protein belongs to the WrbA family. The cofactor is FMN.

It localises to the cell membrane. The enzyme catalyses a quinone + NADH + H(+) = a quinol + NAD(+). It carries out the reaction a quinone + NADPH + H(+) = a quinol + NADP(+). Functionally, catalyzes the transfer of electrons from NADH and NADPH to reduce quinone to the hydroquinone state. This Arabidopsis thaliana (Mouse-ear cress) protein is Probable NAD(P)H dehydrogenase (quinone) FQR1-like 1.